A 180-amino-acid chain; its full sequence is 4-hydroxy-3-methylbut-2-enyl diphosphate reductase (180 aa).

Position 12 (Cys12) interacts with [4Fe-4S] cluster. (2E)-4-hydroxy-3-methylbut-2-enyl diphosphate-binding residues include His41 and His74. Dimethylallyl diphosphate is bound by residues His41 and His74. Isopentenyl diphosphate contacts are provided by His41 and His74. Position 96 (Cys96) interacts with [4Fe-4S] cluster. His124 provides a ligand contact to (2E)-4-hydroxy-3-methylbut-2-enyl diphosphate. His124 contacts dimethylallyl diphosphate. Position 124 (His124) interacts with isopentenyl diphosphate. Glu126 acts as the Proton donor in catalysis. Position 168 (Thr168) interacts with (2E)-4-hydroxy-3-methylbut-2-enyl diphosphate.

It belongs to the IspH family. [4Fe-4S] cluster serves as cofactor.

The enzyme catalyses isopentenyl diphosphate + 2 oxidized [2Fe-2S]-[ferredoxin] + H2O = (2E)-4-hydroxy-3-methylbut-2-enyl diphosphate + 2 reduced [2Fe-2S]-[ferredoxin] + 2 H(+). It carries out the reaction dimethylallyl diphosphate + 2 oxidized [2Fe-2S]-[ferredoxin] + H2O = (2E)-4-hydroxy-3-methylbut-2-enyl diphosphate + 2 reduced [2Fe-2S]-[ferredoxin] + 2 H(+). The protein operates within isoprenoid biosynthesis; dimethylallyl diphosphate biosynthesis; dimethylallyl diphosphate from (2E)-4-hydroxy-3-methylbutenyl diphosphate: step 1/1. It functions in the pathway isoprenoid biosynthesis; isopentenyl diphosphate biosynthesis via DXP pathway; isopentenyl diphosphate from 1-deoxy-D-xylulose 5-phosphate: step 6/6. Its function is as follows. Catalyzes the conversion of 1-hydroxy-2-methyl-2-(E)-butenyl 4-diphosphate (HMBPP) into a mixture of isopentenyl diphosphate (IPP) and dimethylallyl diphosphate (DMAPP). Acts in the terminal step of the DOXP/MEP pathway for isoprenoid precursor biosynthesis. The protein is 4-hydroxy-3-methylbut-2-enyl diphosphate reductase of Pseudomonas fluorescens.